The sequence spans 169 residues: Gastrula zinc finger protein XlCGF62.1 (169 aa).

C2H2-type zinc fingers lie at residues 6–28, 34–56, 62–84, 90–113, 119–141, and 147–169; these read FICTECGKCFSEKRTLKHHIRTH, FICTDCGKCFSFEICLNRHYKTH, FICTECGKSFSDKSRLRVHHRSH, FTCTDCGKCFSVKSILNHHRQAIH, FICTECGKGFASKHYLHGHKRTH, and FVCTECGKGFASNYYLHVHKRTH.

This sequence belongs to the krueppel C2H2-type zinc-finger protein family.

It localises to the nucleus. May be involved in transcriptional regulation. This chain is Gastrula zinc finger protein XlCGF62.1, found in Xenopus laevis (African clawed frog).